The following is a 378-amino-acid chain: tRNA-specific 2-thiouridylase MnmA (378 aa).

ATP contacts are provided by residues 12–19 (GLSGGVDS) and M38. Positions 98–100 (NPD) are interaction with target base in tRNA. C103 serves as the catalytic Nucleophile. C103 and C201 are oxidised to a cystine. An ATP-binding site is contributed by G127. An interaction with tRNA region spans residues 151 to 153 (KDQ). The Cysteine persulfide intermediate role is filled by C201. Positions 319-320 (RY) are interaction with tRNA.

The protein belongs to the MnmA/TRMU family.

Its subcellular location is the cytoplasm. It carries out the reaction S-sulfanyl-L-cysteinyl-[protein] + uridine(34) in tRNA + AH2 + ATP = 2-thiouridine(34) in tRNA + L-cysteinyl-[protein] + A + AMP + diphosphate + H(+). Functionally, catalyzes the 2-thiolation of uridine at the wobble position (U34) of tRNA, leading to the formation of s(2)U34. This is tRNA-specific 2-thiouridylase MnmA from Paracidovorax citrulli (strain AAC00-1) (Acidovorax citrulli).